Consider the following 203-residue polypeptide: V-type ATP synthase subunit D (203 aa).

Belongs to the V-ATPase D subunit family.

In terms of biological role, produces ATP from ADP in the presence of a proton gradient across the membrane. The protein is V-type ATP synthase subunit D of Chlamydia trachomatis serovar L2 (strain ATCC VR-902B / DSM 19102 / 434/Bu).